Reading from the N-terminus, the 151-residue chain is Nucleoside diphosphate kinase (151 aa).

Positions 11, 59, 87, 93, 104, and 114 each coordinate ATP. Residue H117 is the Pros-phosphohistidine intermediate of the active site.

This sequence belongs to the NDK family. In terms of assembly, homotetramer. Mg(2+) is required as a cofactor.

It is found in the cytoplasm. It carries out the reaction a 2'-deoxyribonucleoside 5'-diphosphate + ATP = a 2'-deoxyribonucleoside 5'-triphosphate + ADP. The enzyme catalyses a ribonucleoside 5'-diphosphate + ATP = a ribonucleoside 5'-triphosphate + ADP. In terms of biological role, major role in the synthesis of nucleoside triphosphates other than ATP. The ATP gamma phosphate is transferred to the NDP beta phosphate via a ping-pong mechanism, using a phosphorylated active-site intermediate. The sequence is that of Nucleoside diphosphate kinase from Prochlorococcus marinus (strain SARG / CCMP1375 / SS120).